A 496-amino-acid chain; its full sequence is Probable serine/threonine-protein kinase DDB_G0284251 (496 aa).

Residues 1-13 show a composition bias toward low complexity; the sequence is MIEINNNHNNGNG. Positions 1-25 are disordered; that stretch reads MIEINNNHNNGNGKQFPSSQIMPDS. Positions 36 to 288 constitute a Protein kinase domain; sequence YTLGEKIGRG…AQELLQHPIF (253 aa). Residues 42–50 and K65 contribute to the ATP site; that span reads IGRGAFGQV. Catalysis depends on D158, which acts as the Proton acceptor. The tract at residues 323-345 is disordered; that stretch reads DWGSSSSTSGSSTPLSSSSSSSN. The stretch at 353–386 forms a coiled coil; sequence EDFNKLQTTIKQQAQTISNLSEEILILKKELKEK. Residues 454–496 form a disordered region; the sequence is PQLTPSSSRENISLSNSSSSIPNPNQNQNQNNKSKSKKFGFFS. A compositionally biased stretch (low complexity) spans 458–486; sequence PSSSRENISLSNSSSSIPNPNQNQNQNNK. Residues 487–496 show a composition bias toward basic residues; it reads SKSKKFGFFS.

The protein belongs to the protein kinase superfamily. STE Ser/Thr protein kinase family. Mg(2+) is required as a cofactor.

The enzyme catalyses L-seryl-[protein] + ATP = O-phospho-L-seryl-[protein] + ADP + H(+). The catalysed reaction is L-threonyl-[protein] + ATP = O-phospho-L-threonyl-[protein] + ADP + H(+). The sequence is that of Probable serine/threonine-protein kinase DDB_G0284251 from Dictyostelium discoideum (Social amoeba).